Here is a 612-residue protein sequence, read N- to C-terminus: DNA mismatch repair protein MutL (612 aa).

It belongs to the DNA mismatch repair MutL/HexB family.

This protein is involved in the repair of mismatches in DNA. It is required for dam-dependent methyl-directed DNA mismatch repair. May act as a 'molecular matchmaker', a protein that promotes the formation of a stable complex between two or more DNA-binding proteins in an ATP-dependent manner without itself being part of a final effector complex. The sequence is that of DNA mismatch repair protein MutL from Afipia carboxidovorans (strain ATCC 49405 / DSM 1227 / KCTC 32145 / OM5) (Oligotropha carboxidovorans).